Consider the following 457-residue polypeptide: DNA repair protein RadA (457 aa).

Residues 10-27 (CQECGYESAKWMGKCPGC) form a C4-type zinc finger. Residue 97 to 104 (GDPGIGKS) coordinates ATP. A RadA KNRFG motif motif is present at residues 254–258 (KNRFG). The interval 353–457 (DAYVNVAGGV…QDALEVTLGR (105 aa)) is lon-protease-like.

Belongs to the RecA family. RadA subfamily.

Its function is as follows. DNA-dependent ATPase involved in processing of recombination intermediates, plays a role in repairing DNA breaks. Stimulates the branch migration of RecA-mediated strand transfer reactions, allowing the 3' invading strand to extend heteroduplex DNA faster. Binds ssDNA in the presence of ADP but not other nucleotides, has ATPase activity that is stimulated by ssDNA and various branched DNA structures, but inhibited by SSB. Does not have RecA's homology-searching function. The sequence is that of DNA repair protein RadA from Halalkalibacterium halodurans (strain ATCC BAA-125 / DSM 18197 / FERM 7344 / JCM 9153 / C-125) (Bacillus halodurans).